Reading from the N-terminus, the 525-residue chain is Protein nucleotidyltransferase YdiU (525 aa).

Residues Gly-107, Gly-109, Arg-110, Lys-129, Asp-141, Gly-142, Arg-192, and Arg-199 each contribute to the ATP site. Residue Asp-268 is the Proton acceptor of the active site. The Mg(2+) site is built by Asn-269 and Asp-278. Asp-278 provides a ligand contact to ATP.

The protein belongs to the SELO family. Mg(2+) is required as a cofactor. Mn(2+) serves as cofactor.

The catalysed reaction is L-seryl-[protein] + ATP = 3-O-(5'-adenylyl)-L-seryl-[protein] + diphosphate. It catalyses the reaction L-threonyl-[protein] + ATP = 3-O-(5'-adenylyl)-L-threonyl-[protein] + diphosphate. It carries out the reaction L-tyrosyl-[protein] + ATP = O-(5'-adenylyl)-L-tyrosyl-[protein] + diphosphate. The enzyme catalyses L-histidyl-[protein] + UTP = N(tele)-(5'-uridylyl)-L-histidyl-[protein] + diphosphate. The catalysed reaction is L-seryl-[protein] + UTP = O-(5'-uridylyl)-L-seryl-[protein] + diphosphate. It catalyses the reaction L-tyrosyl-[protein] + UTP = O-(5'-uridylyl)-L-tyrosyl-[protein] + diphosphate. Its function is as follows. Nucleotidyltransferase involved in the post-translational modification of proteins. It can catalyze the addition of adenosine monophosphate (AMP) or uridine monophosphate (UMP) to a protein, resulting in modifications known as AMPylation and UMPylation. The sequence is that of Protein nucleotidyltransferase YdiU from Ralstonia nicotianae (strain ATCC BAA-1114 / GMI1000) (Ralstonia solanacearum).